The sequence spans 496 residues: Mothers against decapentaplegic homolog 6 (496 aa).

Positions 1–15 (MFRSKRSGLVRRLWR) are enriched in basic residues. 2 disordered regions span residues 1-116 (MFRS…PGWL) and 136-156 (GAPR…AGGG). Dimethylated arginine; alternate is present on residues Arg-75 and Arg-82. Omega-N-methylarginine; alternate is present on residues Arg-75 and Arg-82. An MH1 domain is found at 148–275 (AALEPAGGGR…FSRLCGPESP (128 aa)). A Glycyl lysine isopeptide (Lys-Gly) (interchain with G-Cter in ubiquitin) cross-link involves residue Lys-173. Zn(2+) contacts are provided by Cys-205, Cys-247, Cys-260, and His-265. The MH2 domain occupies 331-496 (WCSVAYWEHR…WLEILLNNPR (166 aa)). The residue at position 435 (Ser-435) is a Phosphoserine; by PRKX; in vitro.

It belongs to the dwarfin/SMAD family. In terms of assembly, interacts with NEDD4L. Interacts with WWP1. Interacts with STAMBP and PRKX. Interacts with RNF111 and AXIN1. Interacts with TGF-beta type I receptor superfamily members, including ACVR1B, BMPR1B and TGFBR1. In response to BMP2, but not to TGFB treatment, interacts with SMAD1, but not with SMAD2, nor with SMAD4; this interaction may inhibit SMAD1 binding to SMAD4. Interacts with HOXC8 and HOXC9. Interacts with PELI1; this interaction interferes with PELI1 complex formation with TRAF6, IRAK1, IRAK4 and MYD88 in response to IL1B and hence negatively regulates IL1R-TLR signaling. Interacts with TSC22D1/TSC-22. Phosphorylated by BMP type 1 receptor kinase and by PRKX. Post-translationally, monoubiquitinated at Lys-173 by the E2/E3 hybrid ubiquitin-protein ligase UBE2O, leading to reduced binding affinity for the activated BMP type I receptor ACVR1/ALK2, thereby enhancing BMP7 and regulating adipocyte differentiation. Ubiquitinated by WWP1. Ubiquitinated by ARK2C, promoting proteasomal degradation, leading to enhance the BMP-Smad signaling. In terms of processing, arginine methylation by PRMT1, which is recruited by BMPR2, initiates BMP-Induced signaling and induces dissociation from the BMPR1B receptor at the cell surface leading to derepress downstream Smad1/Smad5 signaling. In terms of tissue distribution, expressed in the brain, heart, ovary, peripheral blood leukocytes, small intestine, spleen, thymus, bone marrow, fetal liver and lymph nodes.

It is found in the nucleus. Transforming growth factor-beta superfamily receptors signaling occurs through the Smad family of intracellular mediators. SMAD6 is an inhibitory Smad (i-Smad) that negatively regulates signaling downstream of type I transforming growth factor-beta. Acts as a mediator of TGF-beta and BMP anti-inflammatory activities. Suppresses IL1R-TLR signaling through its direct interaction with PEL1, preventing NF-kappa-B activation, nuclear transport and NF-kappa-B-mediated expression of pro-inflammatory genes. Blocks the BMP-SMAD1 signaling pathway by competing with SMAD4 for receptor-activated SMAD1-binding. Binds to regulatory elements in target promoter regions. This Homo sapiens (Human) protein is Mothers against decapentaplegic homolog 6 (SMAD6).